The following is a 478-amino-acid chain: Bifunctional protein HldE (478 aa).

Residues 1 to 318 (MKVTLPDFRQ…ENAIRGRADT (318 aa)) form a ribokinase region. Position 195-198 (195-198 (NLSE)) interacts with ATP. D264 is an active-site residue. Positions 344 to 478 (MTNGCFDILH…NTIKANASKS (135 aa)) are cytidylyltransferase.

The protein in the N-terminal section; belongs to the carbohydrate kinase PfkB family. In the C-terminal section; belongs to the cytidylyltransferase family. As to quaternary structure, homodimer.

The enzyme catalyses D-glycero-beta-D-manno-heptose 7-phosphate + ATP = D-glycero-beta-D-manno-heptose 1,7-bisphosphate + ADP + H(+). It catalyses the reaction D-glycero-beta-D-manno-heptose 1-phosphate + ATP + H(+) = ADP-D-glycero-beta-D-manno-heptose + diphosphate. It functions in the pathway nucleotide-sugar biosynthesis; ADP-L-glycero-beta-D-manno-heptose biosynthesis; ADP-L-glycero-beta-D-manno-heptose from D-glycero-beta-D-manno-heptose 7-phosphate: step 1/4. Its pathway is nucleotide-sugar biosynthesis; ADP-L-glycero-beta-D-manno-heptose biosynthesis; ADP-L-glycero-beta-D-manno-heptose from D-glycero-beta-D-manno-heptose 7-phosphate: step 3/4. In terms of biological role, catalyzes the phosphorylation of D-glycero-D-manno-heptose 7-phosphate at the C-1 position to selectively form D-glycero-beta-D-manno-heptose-1,7-bisphosphate. Its function is as follows. Catalyzes the ADP transfer from ATP to D-glycero-beta-D-manno-heptose 1-phosphate, yielding ADP-D-glycero-beta-D-manno-heptose. This Pectobacterium carotovorum subsp. carotovorum (strain PC1) protein is Bifunctional protein HldE.